The following is a 157-amino-acid chain: Crossover junction endodeoxyribonuclease RuvC (157 aa).

Active-site residues include Asp7, Glu66, and Asp139. The Mg(2+) site is built by Asp7, Glu66, and Asp139.

Belongs to the RuvC family. In terms of assembly, homodimer which binds Holliday junction (HJ) DNA. The HJ becomes 2-fold symmetrical on binding to RuvC with unstacked arms; it has a different conformation from HJ DNA in complex with RuvA. In the full resolvosome a probable DNA-RuvA(4)-RuvB(12)-RuvC(2) complex forms which resolves the HJ. Mg(2+) serves as cofactor.

Its subcellular location is the cytoplasm. It carries out the reaction Endonucleolytic cleavage at a junction such as a reciprocal single-stranded crossover between two homologous DNA duplexes (Holliday junction).. Functionally, the RuvA-RuvB-RuvC complex processes Holliday junction (HJ) DNA during genetic recombination and DNA repair. Endonuclease that resolves HJ intermediates. Cleaves cruciform DNA by making single-stranded nicks across the HJ at symmetrical positions within the homologous arms, yielding a 5'-phosphate and a 3'-hydroxyl group; requires a central core of homology in the junction. The consensus cleavage sequence is 5'-(A/T)TT(C/G)-3'. Cleavage occurs on the 3'-side of the TT dinucleotide at the point of strand exchange. HJ branch migration catalyzed by RuvA-RuvB allows RuvC to scan DNA until it finds its consensus sequence, where it cleaves and resolves the cruciform DNA. This Helicobacter pylori (strain P12) protein is Crossover junction endodeoxyribonuclease RuvC.